A 154-amino-acid chain; its full sequence is Ribonuclease 8 (154 aa).

Positions 1–27 (MAPARAGCCPLLLLLLGLWVAEVLVRA) are cleaved as a signal peptide. The Proton acceptor role is filled by histidine 42. Intrachain disulfides connect cysteine 50–cysteine 93, cysteine 64–cysteine 118, cysteine 82–cysteine 133, and cysteine 89–cysteine 96. Residues 65-69 (KDLNT) and lysine 90 contribute to the substrate site. Histidine 149 serves as the catalytic Proton donor.

The protein belongs to the pancreatic ribonuclease family. As to expression, expressed prominently in the placenta and is not detected in any other tissues examined.

The protein resides in the secreted. Functionally, has a low ribonuclease activity. This Homo sapiens (Human) protein is Ribonuclease 8 (RNASE8).